We begin with the raw amino-acid sequence, 205 residues long: Small ribosomal subunit protein bS16 (205 aa).

The disordered stretch occupies residues 110–205; that stretch reads GEEVKIAVGT…ADDNEEPEDE (96 aa). Positions 123–132 are enriched in basic and acidic residues; the sequence is DPLERERERA. Residues 153–205 show a composition bias toward acidic residues; it reads EETEAEEAEDVETADAEDADAASETDEPEAAADEADETDASADADDNEEPEDE.

The protein belongs to the bacterial ribosomal protein bS16 family.

The protein is Small ribosomal subunit protein bS16 of Salinibacter ruber (strain DSM 13855 / M31).